A 382-amino-acid polypeptide reads, in one-letter code: Lipid-A-disaccharide synthase (382 aa).

It belongs to the LpxB family.

It carries out the reaction 2-N,3-O-bis[(3R)-3-hydroxytetradecanoyl]-alpha-D-glucosaminyl 1-phosphate + UDP-2-N,3-O-bis[(3R)-3-hydroxytetradecanoyl]-alpha-D-glucosamine = lipid A disaccharide (E. coli) + UDP + H(+). It catalyses the reaction a lipid X + a UDP-2-N,3-O-bis[(3R)-3-hydroxyacyl]-alpha-D-glucosamine = a lipid A disaccharide + UDP + H(+). It participates in glycolipid biosynthesis; lipid IV(A) biosynthesis; lipid IV(A) from (3R)-3-hydroxytetradecanoyl-[acyl-carrier-protein] and UDP-N-acetyl-alpha-D-glucosamine: step 5/6. Its function is as follows. Condensation of UDP-2,3-diacylglucosamine and 2,3-diacylglucosamine-1-phosphate to form lipid A disaccharide, a precursor of lipid A, a phosphorylated glycolipid that anchors the lipopolysaccharide to the outer membrane of the cell. In Escherichia coli O17:K52:H18 (strain UMN026 / ExPEC), this protein is Lipid-A-disaccharide synthase.